The chain runs to 56 residues: Protein SspF (56 aa).

It belongs to the alpha/beta-type SASP family.

May play some important role in either sporulation or the dormant spore. The polypeptide is Protein SspF (sspF) (Priestia megaterium (strain ATCC 12872 / QMB1551) (Bacillus megaterium)).